The chain runs to 979 residues: Protocadherin alpha-9 (979 aa).

Residues 1–59 (MRLGNRPEDIRTCVHLRWHIHGLLRQENASVVISKCLRHGAWRLLLWLLLLATWDVGSG) form the signal peptide. Over 60-726 (QLHYSVPEEA…RREASLMDVN (667 aa)) the chain is Extracellular. Cadherin domains follow at residues 64–163 (SVPE…PPIF), 164–272 (SVAE…APVF), 273–380 (DRSV…APEI), 381–485 (VLTS…APAF), 486–595 (AHPE…PPTL), and 611–707 (VSRS…VPKA). Asn-287 and Asn-295 each carry an N-linked (GlcNAc...) asparagine glycan. Asn-578 carries N-linked (GlcNAc...) asparagine glycosylation. Residues 727–747 (VYLIIAICAVSSLLVLTLLLY) traverse the membrane as a helical segment. Topologically, residues 748–979 (TALRCSAVPM…GNSTTDNSDQ (232 aa)) are cytoplasmic. 5 PXXP repeats span residues 763 to 766 (LGKP), 828 to 831 (PRQP), 861 to 864 (PGGP), 902 to 905 (PGNP), and 920 to 923 (PGSP). The tract at residues 763–923 (LGKPTLVCSS…PDKFIIPGSP (161 aa)) is 5 X 4 AA repeats of P-X-X-P. Residues 859–979 (AGPGGPDQQW…GNSTTDNSDQ (121 aa)) are disordered. The segment covering 938-952 (DKSDFITFGKKEETK) has biased composition (basic and acidic residues).

The protein localises to the cell membrane. Functionally, potential calcium-dependent cell-adhesion protein. May be involved in the establishment and maintenance of specific neuronal connections in the brain. The protein is Protocadherin alpha-9 of Mus musculus (Mouse).